A 347-amino-acid chain; its full sequence is Holliday junction branch migration complex subunit RuvB (347 aa).

The interval Thr4–Tyr185 is large ATPase domain (RuvB-L). Residues Leu24, Arg25, Gly66, Lys69, Thr70, Thr71, Glu132–Tyr134, Arg175, Tyr185, and Arg222 each bind ATP. Mg(2+) is bound at residue Thr70. The segment at Ser186–Asp256 is small ATPAse domain (RuvB-S). Residues Ala259 to Gln347 are head domain (RuvB-H). Arg295, Arg314, and Arg319 together coordinate DNA.

It belongs to the RuvB family. Homohexamer. Forms an RuvA(8)-RuvB(12)-Holliday junction (HJ) complex. HJ DNA is sandwiched between 2 RuvA tetramers; dsDNA enters through RuvA and exits via RuvB. An RuvB hexamer assembles on each DNA strand where it exits the tetramer. Each RuvB hexamer is contacted by two RuvA subunits (via domain III) on 2 adjacent RuvB subunits; this complex drives branch migration. In the full resolvosome a probable DNA-RuvA(4)-RuvB(12)-RuvC(2) complex forms which resolves the HJ.

Its subcellular location is the cytoplasm. It catalyses the reaction ATP + H2O = ADP + phosphate + H(+). Its function is as follows. The RuvA-RuvB-RuvC complex processes Holliday junction (HJ) DNA during genetic recombination and DNA repair, while the RuvA-RuvB complex plays an important role in the rescue of blocked DNA replication forks via replication fork reversal (RFR). RuvA specifically binds to HJ cruciform DNA, conferring on it an open structure. The RuvB hexamer acts as an ATP-dependent pump, pulling dsDNA into and through the RuvAB complex. RuvB forms 2 homohexamers on either side of HJ DNA bound by 1 or 2 RuvA tetramers; 4 subunits per hexamer contact DNA at a time. Coordinated motions by a converter formed by DNA-disengaged RuvB subunits stimulates ATP hydrolysis and nucleotide exchange. Immobilization of the converter enables RuvB to convert the ATP-contained energy into a lever motion, pulling 2 nucleotides of DNA out of the RuvA tetramer per ATP hydrolyzed, thus driving DNA branch migration. The RuvB motors rotate together with the DNA substrate, which together with the progressing nucleotide cycle form the mechanistic basis for DNA recombination by continuous HJ branch migration. Branch migration allows RuvC to scan DNA until it finds its consensus sequence, where it cleaves and resolves cruciform DNA. In Nitrosospira multiformis (strain ATCC 25196 / NCIMB 11849 / C 71), this protein is Holliday junction branch migration complex subunit RuvB.